A 360-amino-acid chain; its full sequence is Mannose-1-phosphate guanylyltransferase catalytic subunit beta (360 aa).

Residues 2–222 (KALILVGGYG…QGFWMDIGQP (221 aa)) form a substrate-binding domain region. D110 lines the GDP-alpha-D-mannose pocket. D110 is a Mg(2+) binding site. Residue K162 is part of the active site. Position 218 (D218) interacts with GDP-alpha-D-mannose. Position 218 (D218) interacts with Mg(2+). The tract at residues 245 to 360 (RAGPGFLGNV…DSVPEPRIIM (116 aa)) is hexapeptide repeat domain.

The protein belongs to the transferase hexapeptide repeat family. As to quaternary structure, component of the GMPPA-GMPPB mannose-1-phosphate guanylyltransferase complex composed of 4 gmppa subunits and 8 gmppb subunits; the complex is organized into three layers, a central layer made up of 2 gmppa dimers sandwiched between two layers each made up of 2 gmppb dimers. Catalytic activity of gmppb is reduced when part of the complex and binding of GDP-alpha-D-Mannose by gmppa induces allosteric feedback inhibition of gmppb. The cofactor is Mg(2+).

It catalyses the reaction alpha-D-mannose 1-phosphate + GTP + H(+) = GDP-alpha-D-mannose + diphosphate. It participates in nucleotide-sugar biosynthesis; GDP-alpha-D-mannose biosynthesis; GDP-alpha-D-mannose from alpha-D-mannose 1-phosphate (GTP route): step 1/1. With respect to regulation, enzyme activity is reduced by incorporation into the GMPPA-GMPPB mannose-1-phosphate guanylyltransferase complex. Allosterically inhibited, when part of the GMPPA-GMPPB complex, by GDP-alpha-D-mannose binding to GMPPA. Functionally, catalytic subunit of the GMPPA-GMPPB mannose-1-phosphate guanylyltransferase complex. Catalyzes the formation of GDP-mannose, an essential precursor of glycan moieties of glycoproteins and glycolipids. Can catalyze the reverse reaction in vitro. Together with GMPPA regulates GDP-alpha-D-mannose levels. The protein is Mannose-1-phosphate guanylyltransferase catalytic subunit beta (gmppb) of Danio rerio (Zebrafish).